The following is a 172-amino-acid chain: Adenylate kinase isoenzyme 6 (172 aa).

ATP contacts are provided by glycine 13, glycine 15, lysine 16, threonine 17, and threonine 18. The interval 33–56 (NVGDLAREGQLYDGYDEEYGCPIL) is NMPbind. The segment at 108–118 (TRGYNEKKLQD) is LID. Arginine 109 is an ATP binding site.

Belongs to the adenylate kinase family. AK6 subfamily. In terms of assembly, monomer and homodimer. Interacts with small ribosomal subunit protein uS11. Not a structural component of 43S pre-ribosomes, but transiently interacts with them by binding to uS11. Interacts with COIL (via C-terminus).

It localises to the cytoplasm. Its subcellular location is the nucleus. The protein resides in the nucleoplasm. The protein localises to the cajal body. It carries out the reaction AMP + ATP = 2 ADP. It catalyses the reaction ATP + H2O = ADP + phosphate + H(+). In terms of biological role, broad-specificity nucleoside monophosphate (NMP) kinase that catalyzes the reversible transfer of the terminal phosphate group between nucleoside triphosphates and monophosphates. Also has ATPase activity. Involved in the late cytoplasmic maturation steps of the 40S ribosomal particles, specifically 18S rRNA maturation. While NMP activity is not required for ribosome maturation, ATPase activity is. Associates transiently with small ribosomal subunit protein uS11. ATP hydrolysis breaks the interaction with uS11. May temporarily remove uS11 from the ribosome to enable a conformational change of the ribosomal RNA that is needed for the final maturation step of the small ribosomal subunit. Its NMP activity may have a role in nuclear energy homeostasis. May be involved in regulation of Cajal body (CB) formation. This Mus musculus (Mouse) protein is Adenylate kinase isoenzyme 6.